Here is a 269-residue protein sequence, read N- to C-terminus: 3-methyl-2-oxobutanoate hydroxymethyltransferase (269 aa).

The Mg(2+) site is built by Asp48 and Asp87. 3-methyl-2-oxobutanoate contacts are provided by residues 48 to 49 (DS), Asp87, and Lys117. Glu119 provides a ligand contact to Mg(2+). Residue Glu186 is the Proton acceptor of the active site.

This sequence belongs to the PanB family. As to quaternary structure, homodecamer; pentamer of dimers. It depends on Mg(2+) as a cofactor.

Its subcellular location is the cytoplasm. The enzyme catalyses 3-methyl-2-oxobutanoate + (6R)-5,10-methylene-5,6,7,8-tetrahydrofolate + H2O = 2-dehydropantoate + (6S)-5,6,7,8-tetrahydrofolate. It participates in cofactor biosynthesis; (R)-pantothenate biosynthesis; (R)-pantoate from 3-methyl-2-oxobutanoate: step 1/2. In terms of biological role, catalyzes the reversible reaction in which hydroxymethyl group from 5,10-methylenetetrahydrofolate is transferred onto alpha-ketoisovalerate to form ketopantoate. The chain is 3-methyl-2-oxobutanoate hydroxymethyltransferase from Moorella thermoacetica (strain ATCC 39073 / JCM 9320).